We begin with the raw amino-acid sequence, 323 residues long: Elongation factor P--(R)-beta-lysine ligase (323 aa).

74–76 contacts substrate; it reads SPE. ATP-binding positions include 98–100 and Asn107; that span reads RNE. Tyr116 is a substrate binding site. 242–243 provides a ligand contact to ATP; that stretch reads EL. Glu249 lines the substrate pocket. Gly298 provides a ligand contact to ATP.

The protein belongs to the class-II aminoacyl-tRNA synthetase family. EpmA subfamily. As to quaternary structure, homodimer.

It carries out the reaction D-beta-lysine + L-lysyl-[protein] + ATP = N(6)-((3R)-3,6-diaminohexanoyl)-L-lysyl-[protein] + AMP + diphosphate + H(+). Its function is as follows. With EpmB is involved in the beta-lysylation step of the post-translational modification of translation elongation factor P (EF-P). Catalyzes the ATP-dependent activation of (R)-beta-lysine produced by EpmB, forming a lysyl-adenylate, from which the beta-lysyl moiety is then transferred to the epsilon-amino group of a conserved specific lysine residue in EF-P. This chain is Elongation factor P--(R)-beta-lysine ligase, found in Photobacterium profundum (strain SS9).